Consider the following 184-residue polypeptide: Large ribosomal subunit protein uL6 (184 aa).

It belongs to the universal ribosomal protein uL6 family. As to quaternary structure, part of the 50S ribosomal subunit.

In terms of biological role, this protein binds to the 23S rRNA, and is important in its secondary structure. It is located near the subunit interface in the base of the L7/L12 stalk, and near the tRNA binding site of the peptidyltransferase center. This Fervidobacterium nodosum (strain ATCC 35602 / DSM 5306 / Rt17-B1) protein is Large ribosomal subunit protein uL6.